The sequence spans 467 residues: DNA polymerase IV (467 aa).

Residues 5–187 (VLHIDMDAFF…LPVGALWGVG (183 aa)) form the UmuC domain. 2 residues coordinate Mg(2+): Asp-9 and Asp-104. Glu-105 is a catalytic residue. Disordered stretches follow at residues 364–386 (PDTD…VEAP) and 428–449 (TKGR…DPLD).

This sequence belongs to the DNA polymerase type-Y family. As to quaternary structure, monomer. Mg(2+) is required as a cofactor.

It localises to the cytoplasm. The enzyme catalyses DNA(n) + a 2'-deoxyribonucleoside 5'-triphosphate = DNA(n+1) + diphosphate. In terms of biological role, poorly processive, error-prone DNA polymerase involved in untargeted mutagenesis. Copies undamaged DNA at stalled replication forks, which arise in vivo from mismatched or misaligned primer ends. These misaligned primers can be extended by PolIV. Exhibits no 3'-5' exonuclease (proofreading) activity. May be involved in translesional synthesis, in conjunction with the beta clamp from PolIII. This chain is DNA polymerase IV, found in Corynebacterium glutamicum (strain R).